The primary structure comprises 316 residues: Porphobilinogen deaminase (316 aa).

At Cys-240 the chain carries S-(dipyrrolylmethanemethyl)cysteine.

This sequence belongs to the HMBS family. In terms of assembly, monomer. It depends on dipyrromethane as a cofactor.

It carries out the reaction 4 porphobilinogen + H2O = hydroxymethylbilane + 4 NH4(+). The protein operates within porphyrin-containing compound metabolism; protoporphyrin-IX biosynthesis; coproporphyrinogen-III from 5-aminolevulinate: step 2/4. Tetrapolymerization of the monopyrrole PBG into the hydroxymethylbilane pre-uroporphyrinogen in several discrete steps. The protein is Porphobilinogen deaminase of Alkaliphilus metalliredigens (strain QYMF).